A 241-amino-acid polypeptide reads, in one-letter code: Small ribosomal subunit protein uS2 (241 aa).

This sequence belongs to the universal ribosomal protein uS2 family.

The sequence is that of Small ribosomal subunit protein uS2 from Sodalis glossinidius (strain morsitans).